Consider the following 524-residue polypeptide: Cytokinin dehydrogenase 7 (524 aa).

An FAD-binding PCMH-type domain is found at 58-238 (NCVKPLAVVR…TRARVLLQPA (181 aa)). Residues Ala91, Gly93, Asn94, and Gly95 each coordinate FAD. His96 bears the Pros-8alpha-FAD histidine mark. 10 residues coordinate FAD: Ser97, Gln101, Asp162, Thr167, Ser173, Val177, Ile228, Tyr479, Ser514, and Gln517.

The protein belongs to the oxygen-dependent FAD-linked oxidoreductase family. FAD is required as a cofactor. As to expression, expressed in the vasculature of roots, hypocotyls, cotyledons and leaves of young seedlings. In flowers, expressed in the transmitting tissue of the gynoecium prior to pollination. Expressed in the mature embryo sac with maximum activity in the egg cell and the synergids.

It localises to the cytoplasm. The protein localises to the cytosol. It catalyses the reaction N(6)-dimethylallyladenine + A + H2O = 3-methyl-2-butenal + adenine + AH2. Functionally, catalyzes the oxidation of cytokinins, a family of N(6)-substituted adenine derivatives that are plant hormones, where the substituent is an isopentenyl group. Catalyzes in vitro the oxidation of various types of cytokinin nucleotides that are known as direct products of cytokinin biosynthesis. The chain is Cytokinin dehydrogenase 7 (CKX7) from Arabidopsis thaliana (Mouse-ear cress).